The chain runs to 92 residues: MIQRDIEYSGQFSKDVKLAQKRHKDMNKLKYLMTLLINNTLPLPAVYKDHPLQSSWKGYRDAHVEPDWILIYKLTDKLLRFERTGTHAALFG.

Histidine 87 acts as the Proton donor in catalysis.

Belongs to the RelE toxin family. YafQ subfamily. In terms of assembly, monomer in solution, forms a heterotetramer with antitoxin DinJ, with 2 YafQ-DinJ dimers associated via the N-terminus of the DinJ antitoxins (YafQ-(DinJ)2-YafQ).

Its function is as follows. Toxic component of a type II toxin-antitoxin (TA) system. A sequence-specific mRNA endoribonuclease that inhibits translation elongation and induces bacterial stasis. Cleavage occurs between the second and third residue of the Lys codon followed by a G or A (5'AAA(G/A)3'), is reading-frame dependent and occurs within the 5' end of most mRNAs. Ribosome-binding confers the sequence specificity and reading frame-dependence. The YafQ-DinJ heterotetramer binds the consensus sequence 5'-TTTGAGCTACA-3' in the dinJ promoter; DinJ also binds DNA but not as well as the YafQ-DinJ complex. The protein is mRNA interferase toxin YafQ (yafQ) of Escherichia coli (strain B / BL21-DE3).